Reading from the N-terminus, the 321-residue chain is Glucokinase (321 aa).

ATP is bound at residue Gly8 to Thr13.

This sequence belongs to the bacterial glucokinase family.

It is found in the cytoplasm. It carries out the reaction D-glucose + ATP = D-glucose 6-phosphate + ADP + H(+). In Enterobacter sp. (strain 638), this protein is Glucokinase.